The following is a 170-amino-acid chain: MRHSNSGRKFSRTPAHRKAMLHNLAKALLIHGKIRTTEIKAKELRRVVEPLITLAKRNDLHARRQAYRVLNDHALVKRLFDEIGPVFAGVPGGYTRILKMAMPRKGDNAPMAIIELSRSSETAAAEAPKAAKAAPVKEAKPAAEEAPAKPKRTRKPKADEADAEAAKEEN.

Residues A124–A134 show a composition bias toward low complexity. The tract at residues A124 to N170 is disordered. Composition is skewed to basic and acidic residues over residues P135–A148 and P156–N170.

The protein belongs to the bacterial ribosomal protein bL17 family. In terms of assembly, part of the 50S ribosomal subunit. Contacts protein L32.

The polypeptide is Large ribosomal subunit protein bL17 (Desulfovibrio desulfuricans (strain ATCC 27774 / DSM 6949 / MB)).